The following is a 1098-amino-acid chain: Protein diaphanous homolog 2 (1098 aa).

Met1 is modified (N-acetylmethionine). The disordered stretch occupies residues 1–62 (MEELGAAASG…SFRKSATKRE (62 aa)). Residues 36–52 (ANEEETRNKPKLRDRIT) show a composition bias toward basic and acidic residues. Residues 90–463 (SLILSEKEVL…QIVLHCSGMD (374 aa)) form the GBD/FH3 domain. 2 coiled-coil regions span residues 375 to 416 (QLRV…NMLK) and 490 to 539 (EENE…GQGV). Disordered stretches follow at residues 537–565 (QGVPSAIPGPPPPPPLPGAGPCPPPPPPP), 578–611 (PPPPLPGMPGIPPPPPPPLSGVPPPPPPPGGVFP), 679–699 (MKGQRNTEAAEENRSGPPKKK), 1007–1047 (HKRK…NKEG), and 1063–1098 (GAAFRDRRKRIPRNPDNRRPPLERSRSRHNGAMSSK). Composition is skewed to pro residues over residues 543 to 565 (IPGPPPPPPLPGAGPCPPPPPPP) and 578 to 608 (PPPPLPGMPGIPPPPPPPLSGVPPPPPPPGG). The FH1 domain occupies 544–620 (PGPPPPPPLP…PLLSGPIELP (77 aa)). An FH2 domain is found at 625–1025 (QKKLYKPDIP…SRRAKLAKEK (401 aa)). Residues 999 to 1050 (FLEALKENHKRKEMEEKSRRAKLAKEKAEQEKLERQKKKKQLIDINKEGDET) adopt a coiled-coil conformation. Composition is skewed to basic and acidic residues over residues 1007-1032 (HKRKEMEEKSRRAKLAKEKAEQEKLE) and 1075-1087 (RNPDNRRPPLERS). One can recognise a DAD domain in the interval 1048–1078 (DETGVMDNLLEALQSGAAFRDRRKRIPRNPD).

Belongs to the formin homology family. Diaphanous subfamily. Interacts with MAPRE1 and APC.

In terms of biological role, may be involved in oogenesis. The protein is Protein diaphanous homolog 2 (Diaph2) of Mus musculus (Mouse).